A 431-amino-acid chain; its full sequence is MFWRRLRPGAQDLAPKGLPGDGDFRRSSDPRLPKLTPPALRAALGARGSGDWRIPGGGAAWWPEGDAKPGVGVGRLPPRLPALLTATRRAVRKRGLLRSLLPPPLLSAGASRESAPRQPGPGERERPRRRVAREDPDFLGAFLGELLPSRFREFLHQLQEKCAEEPEPLTSPAPQHQRGVLEHCPGSPRCPNCSFLPDLWGQSSHLQDSLTKISLQQTPILGPLKGDHSQFTTVRKANHRPHGAQVPRLKAALTHNPSGEGSRPCRQRCPFRVRFADETLQDTTLRYWERRRSVQQSVIVNQKAALPVASERVFGSVGKRLESLPKALYPGAKEETLASSSCWDCAGLSTQKTQGYLSEDTSMNSSLPFCSWKKAAAQRPRSSLRAFLDPHRNLEQESLLPNRVLQSVLKQGCPKGYHLLLASATLQPDKR.

2 disordered regions span residues 1-37 and 102-132; these read MFWRRLRPGAQDLAPKGLPGDGDFRRSSDPRLPKLTP and PPPLLSAGASRESAPRQPGPGERERPRRRVA. The segment covering 22–32 has biased composition (basic and acidic residues); the sequence is GDFRRSSDPRL. Over residues 106-121 the composition is skewed to low complexity; that stretch reads LSAGASRESAPRQPGP. Residues 122–132 show a composition bias toward basic and acidic residues; sequence GERERPRRRVA.

It is found in the cytoplasm. This is an uncharacterized protein from Homo sapiens (Human).